The following is a 450-amino-acid chain: Phosphoglucosamine mutase (450 aa).

The active-site Phosphoserine intermediate is S101. Mg(2+)-binding residues include S101, D240, D242, and D244. Residue S101 is modified to Phosphoserine.

The protein belongs to the phosphohexose mutase family. Requires Mg(2+) as cofactor. Activated by phosphorylation.

The enzyme catalyses alpha-D-glucosamine 1-phosphate = D-glucosamine 6-phosphate. In terms of biological role, catalyzes the conversion of glucosamine-6-phosphate to glucosamine-1-phosphate. This is Phosphoglucosamine mutase from Streptococcus thermophilus (strain ATCC BAA-250 / LMG 18311).